The following is a 270-amino-acid chain: Protein MGF 110-1L (270 aa).

The signal sequence occupies residues 1–26; sequence MLGLQIFTLLSIPTLLYTYEIEPLER. The Extracellular segment spans residues 27-117; that stretch reads TSTPPEKELG…HERHEADIRK (91 aa). The stretch at 27 to 146 is one A repeat; sequence TSTPPEKELG…YIRKRSLQTV (120 aa). Asn75 carries N-linked (GlcNAc...) asparagine; by host glycosylation. A helical membrane pass occupies residues 118–138; the sequence is WQKLLTYGFYLAGCILAVNYI. The Cytoplasmic portion of the chain corresponds to 139 to 145; that stretch reads RKRSLQT. Residues 146–166 form a helical membrane-spanning segment; the sequence is VMYLLVFLVISFLLSQLMLYG. A B repeat occupies 147–270; that stretch reads MYLLVFLVIS…DNLMKKQDIM (124 aa). The Extracellular segment spans residues 167 to 270; sequence ELEDKKHKIG…DNLMKKQDIM (104 aa).

This sequence belongs to the asfivirus MGF 110 family.

It localises to the membrane. Plays a role in virus cell tropism, and may be required for efficient virus replication in macrophages. This Ornithodoros (relapsing fever ticks) protein is Protein MGF 110-1L.